The chain runs to 98 residues: Large ribosomal subunit protein uL23 (98 aa).

This sequence belongs to the universal ribosomal protein uL23 family. As to quaternary structure, part of the 50S ribosomal subunit. Contacts protein L29, and trigger factor when it is bound to the ribosome.

One of the early assembly proteins it binds 23S rRNA. One of the proteins that surrounds the polypeptide exit tunnel on the outside of the ribosome. Forms the main docking site for trigger factor binding to the ribosome. The sequence is that of Large ribosomal subunit protein uL23 from Teredinibacter turnerae (strain ATCC 39867 / T7901).